The primary structure comprises 417 residues: Gamma-glutamyl phosphate reductase (417 aa).

Belongs to the gamma-glutamyl phosphate reductase family.

It localises to the cytoplasm. The enzyme catalyses L-glutamate 5-semialdehyde + phosphate + NADP(+) = L-glutamyl 5-phosphate + NADPH + H(+). The protein operates within amino-acid biosynthesis; L-proline biosynthesis; L-glutamate 5-semialdehyde from L-glutamate: step 2/2. Catalyzes the NADPH-dependent reduction of L-glutamate 5-phosphate into L-glutamate 5-semialdehyde and phosphate. The product spontaneously undergoes cyclization to form 1-pyrroline-5-carboxylate. This chain is Gamma-glutamyl phosphate reductase, found in Cronobacter sakazakii (strain ATCC BAA-894) (Enterobacter sakazakii).